We begin with the raw amino-acid sequence, 607 residues long: Zinc finger protein 750 (607 aa).

The CCHC-type zinc-finger motif lies at 25–51; that stretch reads YQCFQCPFTCNIKSHLFNHMKYNLCKN. The Zn(2+) site is built by C27, C30, H43, and C49. Residues 60-78 are compositionally biased toward polar residues; sequence MEQTGKASRASQHSPAFSH. 4 disordered regions span residues 60-133, 318-467, 482-511, and 575-607; these read MEQT…DKSE, RAVQ…SSQE, QALP…QDLE, and GQKR…SQNC. 2 stretches are compositionally biased toward basic and acidic residues: residues 79–133 and 318–334; these read NSKE…DKSE and RAVQ…RESP. Residues 369 to 380 are compositionally biased toward low complexity; it reads HSGSQSHIISGS. Residues 421–432 show a composition bias toward acidic residues; the sequence is DKEEDEETEEEI. Basic and acidic residues predominate over residues 452 to 462; that stretch reads HYPDRELHYDS. The segment covering 496-507 has biased composition (polar residues); the sequence is ISNAEVSTTESP. Residues 579–592 show a composition bias toward basic residues; sequence ANNRPLRHTNKRAK.

The protein localises to the nucleus. In terms of biological role, transcription factor involved in epidermis differentiation. The polypeptide is Zinc finger protein 750 (znf750) (Danio rerio (Zebrafish)).